The sequence spans 451 residues: Adenylosuccinate synthetase isozyme 2 (451 aa).

Residues 34–40 and 62–64 each bind GTP; these read GDEGKGK and GHT. Catalysis depends on D35, which acts as the Proton acceptor. Residues D35 and G62 each contribute to the Mg(2+) site. D35 provides a ligand contact to substrate. IMP-binding positions include 35–38, 60–63, T157, R171, N250, T265, and R329; these read DEGK and NAGH. H63 functions as the Proton donor in the catalytic mechanism. 325-331 contacts substrate; that stretch reads VTTGRKR. GTP is bound by residues R331, 357–359, and 439–442; these read KLD and GVGK.

This sequence belongs to the adenylosuccinate synthetase family. Homodimer. Mg(2+) is required as a cofactor.

It localises to the cytoplasm. Its subcellular location is the mitochondrion. It catalyses the reaction IMP + L-aspartate + GTP = N(6)-(1,2-dicarboxyethyl)-AMP + GDP + phosphate + 2 H(+). It functions in the pathway purine metabolism; AMP biosynthesis via de novo pathway; AMP from IMP: step 1/2. Inhibited competitively by AMP and IMP and non-competitively by fructose 1,6-bisphosphate. Its function is as follows. Plays an important role in the de novo pathway and in the salvage pathway of purine nucleotide biosynthesis. Catalyzes the first committed step in the biosynthesis of AMP from IMP. The chain is Adenylosuccinate synthetase isozyme 2 from Gallus gallus (Chicken).